A 633-amino-acid chain; its full sequence is Probable extracellular metalloproteinase 5 (633 aa).

Positions 1-20 are cleaved as a signal peptide; the sequence is MHGLLLAAAGLLSLPLHVLA. The propeptide occupies 21–244; it reads HPQPSTNLAG…VHNVVDYVSH (224 aa). N-linked (GlcNAc...) asparagine glycosylation is present at Asn-285. His-428 provides a ligand contact to Zn(2+). Glu-429 is an active-site residue. His-432 lines the Zn(2+) pocket. 2 N-linked (GlcNAc...) asparagine glycosylation sites follow: Asn-592 and Asn-621.

The protein belongs to the peptidase M36 family. It depends on Zn(2+) as a cofactor.

Its subcellular location is the secreted. Secreted metalloproteinase probably acting as a virulence factor. The chain is Probable extracellular metalloproteinase 5 (MEP5) from Trichophyton verrucosum (strain HKI 0517).